Here is a 494-residue protein sequence, read N- to C-terminus: Ribitol 5-phosphate transferase FKRP (494 aa).

Residues 1–6 (MRLTRC) lie on the Cytoplasmic side of the membrane. The chain crosses the membrane as a helical span at residues 7–29 (WAALAAAIILNLLVFFYVSWLQH). Over 30 to 494 (QPRNSRARGP…NPALLSLTGG (465 aa)) the chain is Lumenal. Cys168 and Cys191 are oxidised to a cystine. N-linked (GlcNAc...) asparagine glycosylation is found at Asn172 and Asn209. Zn(2+)-binding residues include Cys289, Cys296, Cys317, and Cys318. The zinc finger loop stretch occupies residues 289–318 (CSKESARCFGTVAGDTPAYLYEGRWTPPCC). Residues Gly345 and Arg352 each contribute to the CDP-L-ribitol site. 3 CDP-L-ribitol regions span residues 359 to 364 (WDYDVD), 437 to 438 (QD), and 480 to 482 (NPE). The Mg(2+) site is built by Asp360, Asp362, and Asp364.

The protein belongs to the LicD transferase family. As to quaternary structure, homodimer; disulfide-linked. Forms a complex composed of FKRP, FKTN/fukutin, and RXYLT1/TMEM5. Also exists as large multimeric protein complexes. May interact with the dystrophin-glycoprotein complex (DGC). In terms of processing, N-glycosylated. As to expression, expressed in the retina, specifically in the inner segments of the photoreceptors, the outer plexiform layers, inner nuclear layers, and ganglion cell layers (at protein level). Expressed at highest levels in brain, lung, heart, kidney and liver.

Its subcellular location is the golgi apparatus membrane. It localises to the secreted. The protein localises to the cell membrane. It is found in the sarcolemma. The protein resides in the rough endoplasmic reticulum. Its subcellular location is the cytoplasm. It carries out the reaction 3-O-[Rib-ol-P-3-beta-D-GalNAc-(1-&gt;3)-beta-D-GlcNAc-(1-&gt;4)-(O-6-P-alpha-D-Man)]-Thr-[protein] + CDP-L-ribitol = 3-O-[Rib-ol-P-Rib-ol-P-3-beta-D-GalNAc-(1-&gt;3)-beta-D-GlcNAc-(1-&gt;4)-(O-6-P-alpha-D-Man)]-Thr-[protein] + CMP + H(+). It participates in protein modification; protein glycosylation. Functionally, catalyzes the transfer of CDP-ribitol to ribitol 5-phosphate previously attached by FKTN/fukutin of to the phosphorylated O-mannosyl trisaccharide (N-acetylgalactosamine-beta-3-N-acetylglucosamine-beta-4-(phosphate-6-)mannose), a carbohydrate structure present in alpha-dystroglycan (DAG1). This constitutes the second step in the formation of the ribose 5-phosphate tandem repeat which links the phosphorylated O-mannosyl trisaccharide to the ligand binding moiety composed of repeats of 3-xylosyl-alpha-1,3-glucuronic acid-beta-1. The sequence is that of Ribitol 5-phosphate transferase FKRP from Mus musculus (Mouse).